The chain runs to 173 residues: Transmembrane protein 278 (173 aa).

Over residues 1–14 (MSEQERETEEDEGV) the composition is skewed to acidic residues. Positions 1–25 (MSEQERETEEDEGVASDTAPMLPRR) are disordered. Helical transmembrane passes span 31–51 (HISV…VLSG), 53–73 (ALVG…LVLL), and 107–127 (AALI…AAAA). The disordered stretch occupies residues 141–165 (DPARTPAPRRPPRSSGDLADGHPDE).

The protein belongs to the TMEM88 family.

The protein resides in the membrane. This is Transmembrane protein 278 (Tmem278) from Mus musculus (Mouse).